Consider the following 333-residue polypeptide: Adenosine deaminase (333 aa).

2 residues coordinate Zn(2+): histidine 12 and histidine 14. Residues histidine 14, aspartate 16, and glycine 170 each coordinate substrate. Residue histidine 197 participates in Zn(2+) binding. The active-site Proton donor is the glutamate 200. Residue aspartate 278 participates in Zn(2+) binding. Substrate is bound at residue aspartate 279.

Belongs to the metallo-dependent hydrolases superfamily. Adenosine and AMP deaminases family. Adenosine deaminase subfamily. Zn(2+) serves as cofactor.

It catalyses the reaction adenosine + H2O + H(+) = inosine + NH4(+). The enzyme catalyses 2'-deoxyadenosine + H2O + H(+) = 2'-deoxyinosine + NH4(+). Its function is as follows. Catalyzes the hydrolytic deamination of adenosine and 2-deoxyadenosine. The chain is Adenosine deaminase from Salmonella gallinarum (strain 287/91 / NCTC 13346).